A 430-amino-acid polypeptide reads, in one-letter code: RNA pseudouridine synthase 2, chloroplastic (430 aa).

The transit peptide at 1–43 (MLSISQLPSFSLTTAKSLRYPSSPSSSLSIFFSFFPKVSNFVR) directs the protein to the chloroplast. Residues 82–155 (IRLDSWISSR…IPLDIVYEDK (74 aa)) form the S4 RNA-binding domain. The segment at 195 to 222 (SNSEEDDDSDEETFSDDEEMTTSPSSYA) is disordered. The segment covering 196–214 (NSEEDDDSDEETFSDDEEM) has biased composition (acidic residues). Residue Asp-234 is part of the active site.

This sequence belongs to the pseudouridine synthase RluA family.

The protein localises to the plastid. It localises to the chloroplast. The enzyme catalyses a uridine in RNA = a pseudouridine in RNA. This Arabidopsis thaliana (Mouse-ear cress) protein is RNA pseudouridine synthase 2, chloroplastic.